Reading from the N-terminus, the 342-residue chain is Zinc transporter ZIP11 (342 aa).

7 consecutive transmembrane segments (helical) span residues 12-32 (LLGT…VFVF), 44-64 (LGFA…APAV), 72-92 (GFGA…AAFV), 194-214 (IALL…AVGV), 263-285 (FWYG…FAVV), 290-307 (ILPY…YVVM), and 322-342 (LASW…VGLG).

This sequence belongs to the ZIP transporter (TC 2.A.5) family.

Its subcellular location is the cell membrane. It is found in the nucleus. The protein resides in the cytoplasm. It localises to the golgi apparatus. The catalysed reaction is Zn(2+)(in) = Zn(2+)(out). It catalyses the reaction Cu(2+)(in) = Cu(2+)(out). Zinc importer that regulates cytosolic zinc concentrations either via zinc influx from the extracellular compartment or efflux from intracellular organelles such as Golgi apparatus. May transport copper ions as well. The transport mechanism remains to be elucidated. This is Zinc transporter ZIP11 (SLC39A11) from Homo sapiens (Human).